Here is a 524-residue protein sequence, read N- to C-terminus: MPVAVESAIPYPTPRKVDLAHHLSTEARIRQPNPIKSVWKAAQVRPGIINMGNGDPHHTLYPISSMNFIVPSLEGDHPVEAWRTGTSKTLVLSSHKDAPSTLSLRTAFAYGAGAGLPAVREALADLGARIHAPPNHTVCLSLGNADALTKCFRLFGDPDDSFLCEEFTFSAMTNAALALGIRWVPVRVDGGGLLPEDLERVMRCWDEKKQGKRPHVLYTVPCSQNPTGSTISLERRRRIYEVAHIYDIIIIEDDPYYFLQYDLQINQNTLKEHGYTRAMSEVLPRSFLSMDIDGRVVRLDSFSKVLAPGIRLGWITSSPFFADKLDMLTDSSTQHPHGLGQAYLAELLGPTGWGADGLMKWVHSLAREYERRRDLFVSVFDAKVAPTGCASAEVPQSGMFVWIQVHLETHPRFVVRTPDSGSDDEGDVLGAVMAAPGVLGEVARGGPITNTEQLMSELLRKLVESGVIMIPASTFAIVDRSGSTLSPIGDRANYLRATFVGTDETIRDGLTIFAQALEEFFNLK.

It belongs to the class-I pyridoxal-phosphate-dependent aminotransferase family. Pyridoxal 5'-phosphate is required as a cofactor.

It carries out the reaction L-tyrosine + 2-oxoglutarate = 3-(4-hydroxyphenyl)pyruvate + L-glutamate. Its pathway is secondary metabolite biosynthesis. In terms of biological role, the L-tyrosine:2-oxoglutarate aminotransferase atrD and the atromentin synthetase atrA catalyze consecutive steps to turn over L-tyrosine into atromentin, which represents the generic precursor molecule for the entire terphenylquinone and pulvinic acid family of pigments, which are widely distributed secondary metabolites in homobasidiomycetes. The first step is catalyzed by atrD which converts L-tyrosine in to 4-hydroxyphenylpyruvate (4-HPP). Adenylation of two 4-HPP monomers by the atrA adenylation (A) domain, ester bond formation between monomers and atrA, and symmetric C-C-bond formation between two monomers by atrA leads to atromentin. This chain is L-tyrosine:2-oxoglutarate aminotransferase atrD, found in Tapinella panuoides (Oyster rollrim mushroom).